Here is a 406-residue protein sequence, read N- to C-terminus: Purine nucleoside permease (406 aa).

The first 22 residues, 1–22 (MKLSTLFTLATTISTLTTFTIA), serve as a signal peptide directing secretion.

The protein belongs to the NUP family.

With respect to regulation, mammalian nucleoside transport inhibitors dipyridamole and NBMPR inhibit adenosine transport by NUP. Its function is as follows. Nucleoside permease that transports adenosine and guanosine. Does not show any transport activities towards cytidine, adenine, guanine, uridine, and uracil. This chain is Purine nucleoside permease, found in Candida albicans (Yeast).